A 126-amino-acid chain; its full sequence is Large ribosomal subunit protein uL22 (126 aa).

The protein belongs to the universal ribosomal protein uL22 family. As to quaternary structure, part of the 50S ribosomal subunit.

This protein binds specifically to 23S rRNA; its binding is stimulated by other ribosomal proteins, e.g. L4, L17, and L20. It is important during the early stages of 50S assembly. It makes multiple contacts with different domains of the 23S rRNA in the assembled 50S subunit and ribosome. In terms of biological role, the globular domain of the protein is located near the polypeptide exit tunnel on the outside of the subunit, while an extended beta-hairpin is found that lines the wall of the exit tunnel in the center of the 70S ribosome. In Caulobacter vibrioides (strain ATCC 19089 / CIP 103742 / CB 15) (Caulobacter crescentus), this protein is Large ribosomal subunit protein uL22.